The following is a 181-amino-acid chain: Shikimate kinase 2 (181 aa).

12 to 17 (GCGKTT) is a binding site for ATP. Residues T16 and D32 each contribute to the Mg(2+) site. Substrate-binding residues include D34, R58, and G79. The LID domain stretch occupies residues 112–126 (EAEPEAELRPTLTGK). Residue R120 participates in ATP binding. Residue R139 coordinates substrate.

It belongs to the shikimate kinase family. AroL subfamily. As to quaternary structure, monomer. The cofactor is Mg(2+).

The protein resides in the cytoplasm. It catalyses the reaction shikimate + ATP = 3-phosphoshikimate + ADP + H(+). It participates in metabolic intermediate biosynthesis; chorismate biosynthesis; chorismate from D-erythrose 4-phosphate and phosphoenolpyruvate: step 5/7. Its function is as follows. Catalyzes the specific phosphorylation of the 3-hydroxyl group of shikimic acid using ATP as a cosubstrate. This chain is Shikimate kinase 2, found in Salmonella schwarzengrund (strain CVM19633).